Consider the following 415-residue polypeptide: Sphingomyelin synthase-related protein 1 (415 aa).

Residues 12–78 (WTTKHVAVWL…MLSVRKLQKI (67 aa)) form the SAM domain. 4 helical membrane passes run 153-173 (ILSC…MVIV), 201-221 (FAMT…VLLL), 232-252 (LCSL…VTSL), and 277-297 (FAIW…GDYM). Residue histidine 301 is part of the active site. A helical membrane pass occupies residues 322-342 (FLHTLSWVLNLFGIFFILAAH). Active-site residues include histidine 344 and aspartate 348. A helical transmembrane segment spans residues 347–367 (IDVFIAFYITTRLFLYYHTLA). Residues 368–415 (NTRAYQQSRRARIWFPMFSFFECNVNGTVPNEYCWPFSKPAIMKRLIG) lie on the Cytoplasmic side of the membrane.

It belongs to the sphingomyelin synthase family.

The protein resides in the endoplasmic reticulum membrane. It carries out the reaction an N-acylsphing-4-enine + a 1,2-diacyl-sn-glycero-3-phosphoethanolamine = an N-acylsphing-4-enine 1-phosphoethanolamine + a 1,2-diacyl-sn-glycerol. The catalysed reaction is an N-acylsphinganine + a 1,2-diacyl-sn-glycero-3-phosphoethanolamine = an N-acylsphinganine-1-phosphoethanolamine + a 1,2-diacyl-sn-glycerol. The enzyme catalyses an N-acyl-(4R)-4-hydroxysphinganine + a 1,2-diacyl-sn-glycero-3-phosphoethanolamine = an N-acyl-(4R)-4-hydroxysphinganine-1-phosphoethanolamine + a 1,2-diacyl-sn-glycerol. It catalyses the reaction N-hexadecanoylsphinganine + a 1,2-diacyl-sn-glycero-3-phosphoethanolamine = N-hexadecanoyl-sphinganine-1-phosphoethanolamine + a 1,2-diacyl-sn-glycerol. It carries out the reaction N-hexadecanoyl-(4R)-hydroxysphinganine + a 1,2-diacyl-sn-glycero-3-phosphoethanolamine = N-hexadecanoyl-(4R)-hydroxysphinganine-1-phosphoethanolamine + a 1,2-diacyl-sn-glycerol. Its pathway is sphingolipid metabolism. Functionally, synthesizes sphingolipids through transfer of a phosphatidyl head group from a glycerophospholipid on to the primary hydroxyl of a ceramide in the lumen of the endoplasmic reticulum. Catalyzes the synthesis of ceramide phosphoethanolamines (CPEs) (such as N-acylsphing-4-enine 1-phosphoethanolamine) by transferring phosphoethanolamine head group, which is smaller and more hydrophilic than the phosphocholine (PC) headgroup transferred in the canonical sphingomyelin synthesis (SMS) reaction by SMS1 or SMS2, from a phosphatidylethanolamine (1,2-diacyl-sn-glycero-3-phosphoethanolamine, PE) to a ceramide (such as N-acylsphing-4-enine). The larger PC prevents an efficient fit in the enzyme's catalytic pocket, leading to little or no SMS activity. In vitro, in the absence of ceramide, it has PLC activity with preference for phosphatidylinositol and phosphatidic acid, but also hydrolyzes phosphatidylethanolamine. In Homo sapiens (Human), this protein is Sphingomyelin synthase-related protein 1.